A 542-amino-acid polypeptide reads, in one-letter code: Chaperonin GroEL (542 aa).

Residues 29–32 (TLGP), 86–90 (DGTTT), Gly413, 476–478 (NAA), and Asp492 each bind ATP.

The protein belongs to the chaperonin (HSP60) family. As to quaternary structure, forms a cylinder of 14 subunits composed of two heptameric rings stacked back-to-back. Interacts with the co-chaperonin GroES.

It is found in the cytoplasm. The catalysed reaction is ATP + H2O + a folded polypeptide = ADP + phosphate + an unfolded polypeptide.. Functionally, together with its co-chaperonin GroES, plays an essential role in assisting protein folding. The GroEL-GroES system forms a nano-cage that allows encapsulation of the non-native substrate proteins and provides a physical environment optimized to promote and accelerate protein folding. The protein is Chaperonin GroEL of Streptococcus mutans serotype c (strain ATCC 700610 / UA159).